The sequence spans 429 residues: Adenylosuccinate synthetase (429 aa).

GTP is bound by residues 13–19 (GDEGKGK) and 41–43 (GHT). The active-site Proton acceptor is aspartate 14. Aspartate 14 and glycine 41 together coordinate Mg(2+). IMP-binding positions include 14 to 17 (DEGK), 39 to 42 (NAGH), threonine 130, arginine 144, glutamine 225, threonine 240, and arginine 304. Histidine 42 serves as the catalytic Proton donor. 300–306 (ATTGRAR) lines the substrate pocket. Residues arginine 306, 332-334 (KLD), and 414-416 (STG) contribute to the GTP site.

Belongs to the adenylosuccinate synthetase family. As to quaternary structure, homodimer. Mg(2+) is required as a cofactor.

The protein resides in the cytoplasm. It carries out the reaction IMP + L-aspartate + GTP = N(6)-(1,2-dicarboxyethyl)-AMP + GDP + phosphate + 2 H(+). The protein operates within purine metabolism; AMP biosynthesis via de novo pathway; AMP from IMP: step 1/2. Functionally, plays an important role in the de novo pathway of purine nucleotide biosynthesis. Catalyzes the first committed step in the biosynthesis of AMP from IMP. In Acidithiobacillus ferrooxidans (Thiobacillus ferrooxidans), this protein is Adenylosuccinate synthetase.